Here is a 266-residue protein sequence, read N- to C-terminus: Putative cysteine-rich repeat secretory protein 20 (266 aa).

A signal peptide spans 1–33; the sequence is MYFPPSSVPKRLVLVHISAVVAIKLLLIRSVSS. Gnk2-homologous domains are found at residues 40–142 and 148–261; these read YLQH…SIRN and YNNN…LYPF.

It belongs to the cysteine-rich repeat secretory protein family.

It is found in the secreted. The chain is Putative cysteine-rich repeat secretory protein 20 (CRRSP20) from Arabidopsis thaliana (Mouse-ear cress).